Reading from the N-terminus, the 270-residue chain is Secreted RxLR effector protein 149 (270 aa).

The signal sequence occupies residues 1-21 (MRNGVVLFGLFFIGYSSCVLA). Residues 43 to 58 (RTLQADDPERILAEER) carry the RxLR-dEER motif.

The protein belongs to the RxLR effector family.

The protein localises to the secreted. It is found in the host nucleus. It localises to the host cytoplasm. Functionally, secreted effector that completely suppresses the host cell death induced by cell death-inducing proteins. The sequence is that of Secreted RxLR effector protein 149 from Plasmopara viticola (Downy mildew of grapevine).